The following is a 296-amino-acid chain: Trimeric intracellular cation channel type A (296 aa).

At 1 to 19 (MELPGALQLGELAAAFASV) the chain is on the lumenal side. The helical transmembrane segment at 20–37 (PVFPLFDAAYFIVSVLYL) threads the bilayer. Topologically, residues 38-51 (KYEPGAVEMSRKSP) are cytoplasmic. Residues 52 to 73 (FASWLCAMLHCFGSYILADLLL) form a helical membrane-spanning segment. G74 contacts Ca(2+). Residues 74 to 85 (GESPIHYFSNNS) lie on the Lumenal side of the membrane. The chain crosses the membrane as a helical span at residues 86-103 (SVILATAVWYLIFFCPMN). Over 104-107 (LFYK) the chain is Cytoplasmic. A helical transmembrane segment spans residues 108 to 126 (CVSFLPVKLIFVAMKEVVR). 2 residues coordinate a 1,2-diacyl-sn-glycero-3-phospho-(1D-myo-inositol-4,5-bisphosphate): K122 and R126. The Lumenal portion of the chain corresponds to 127-144 (VRKIAAGVHHAHHQYHHG). A helical transmembrane segment spans residues 145 to 162 (WFIMMATGWVKGSGVALM). The Cytoplasmic portion of the chain corresponds to 163–183 (SNFEQLLRGVWRPETNEILHM). Residues 184–201 (SFPTKASLYGTVLFTLQQ) traverse the membrane as a helical segment. Residues 202-209 (THWLPVSE) are Lumenal-facing. Residues 210 to 230 (ANLVFFFTMFMIVCKVFMTAT) form a helical membrane-spanning segment. Over 231 to 273 (HSHASPFAPVEGFICPVFFGSVSSGHTSHHNQHGHSHEASYQP) the chain is Cytoplasmic. The tract at residues 256–296 (HTSHHNQHGHSHEASYQPPPPVKSKEELNEGTRKRKAKKAE) is disordered. Positions 278-287 (KSKEELNEGT) are enriched in basic and acidic residues.

It belongs to the TMEM38 family. In terms of assembly, homotrimer; conformation seems to be controled by binding to diacylglycerol (DAG).

It is found in the sarcoplasmic reticulum membrane. The protein resides in the nucleus membrane. The catalysed reaction is K(+)(in) = K(+)(out). With respect to regulation, channel activity is activated by a change of voltage within the sarcoplasmic reticulum lumen and blocked by luminal high Ca(2+) levels. Intracellular monovalent cation channel required for maintenance of rapid intracellular calcium release. Acts as a potassium counter-ion channel that functions in synchronization with calcium release from intracellular stores. Opened by a change of voltage within the sarcoplasmic reticulum lumen. The polypeptide is Trimeric intracellular cation channel type A (TMEM38A) (Gallus gallus (Chicken)).